The sequence spans 435 residues: AP-2 complex subunit mu (435 aa).

An MHD domain is found at 170-434 (RNELFLDVLE…IGRSGIYETR (265 aa)). A 1,2-diacyl-sn-glycero-3-phospho-(1D-myo-inositol-3,4,5-trisphosphate) contacts are provided by lysine 341, lysine 345, and lysine 354.

This sequence belongs to the adaptor complexes medium subunit family. Adaptor protein complex 2 (AP-2) is a heterotetramer composed of two large adaptins (alpha-type subunit and beta-type subunit), a medium adaptin (mu-type subunit) and a small adaptin (sigma-type subunit).

It localises to the cell membrane. Its subcellular location is the membrane. The protein resides in the coated pit. Component of the adaptor complexes which link clathrin to receptors in coated vesicles. Clathrin-associated protein complexes are believed to interact with the cytoplasmic tails of membrane proteins, leading to their selection and concentration. AP50 is a subunit of the plasma membrane adaptor. The complex binds polyphosphoinositide-containing lipids. This Xenopus laevis (African clawed frog) protein is AP-2 complex subunit mu (ap2m1).